The chain runs to 229 residues: Large ribosomal subunit protein uL1 (229 aa).

The protein belongs to the universal ribosomal protein uL1 family. As to quaternary structure, part of the 50S ribosomal subunit.

Binds directly to 23S rRNA. The L1 stalk is quite mobile in the ribosome, and is involved in E site tRNA release. Functionally, protein L1 is also a translational repressor protein, it controls the translation of the L11 operon by binding to its mRNA. The polypeptide is Large ribosomal subunit protein uL1 (Clostridium perfringens (strain ATCC 13124 / DSM 756 / JCM 1290 / NCIMB 6125 / NCTC 8237 / Type A)).